A 120-amino-acid chain; its full sequence is T-cell receptor beta chain V region PHDS203 (120 aa).

The signal sequence occupies residues 1 to 11 (VVLCFLGTGLV). Residues 12–106 (DMKVTQMSRY…TSVYFCAQGA (95 aa)) are v segment. The cysteines at positions 34 and 102 are disulfide-linked. Residues 107–120 (PEQYFGPGTRLTVL) are j segment.

This is T-cell receptor beta chain V region PHDS203 from Mus musculus (Mouse).